A 67-amino-acid chain; its full sequence is MQVLVRDNNVDQALRALKKKMQREGIFREMKLRRNYEKPSEKRAREKAEAIRRARKLLRKRLEREGY.

The protein belongs to the bacterial ribosomal protein bS21 family.

In Rhodospirillum centenum (strain ATCC 51521 / SW), this protein is Small ribosomal subunit protein bS21.